Consider the following 362-residue polypeptide: S-adenosylmethionine:tRNA ribosyltransferase-isomerase (362 aa).

It belongs to the QueA family. Monomer.

It is found in the cytoplasm. The enzyme catalyses 7-aminomethyl-7-carbaguanosine(34) in tRNA + S-adenosyl-L-methionine = epoxyqueuosine(34) in tRNA + adenine + L-methionine + 2 H(+). It participates in tRNA modification; tRNA-queuosine biosynthesis. Transfers and isomerizes the ribose moiety from AdoMet to the 7-aminomethyl group of 7-deazaguanine (preQ1-tRNA) to give epoxyqueuosine (oQ-tRNA). The sequence is that of S-adenosylmethionine:tRNA ribosyltransferase-isomerase from Deinococcus radiodurans (strain ATCC 13939 / DSM 20539 / JCM 16871 / CCUG 27074 / LMG 4051 / NBRC 15346 / NCIMB 9279 / VKM B-1422 / R1).